The sequence spans 858 residues: Chitin synthase 2 (858 aa).

Residues 1-12 (MYPEGPKPEHDQ) are compositionally biased toward basic and acidic residues. Residues 1–116 (MYPEGPKPEH…GQAPRRQPRR (116 aa)) form a disordered region. A compositionally biased stretch (polar residues) spans 15-24 (LQDTQFSNQP). 2 stretches are compositionally biased toward pro residues: residues 52-68 (AYPP…PNFP) and 76-89 (PYPP…PVSP). A run of 7 helical transmembrane segments spans residues 500 to 517 (RWLN…YHWR), 540 to 560 (TYNL…FFIL), 586 to 606 (LHTV…IMAL), 621 to 641 (MVFF…ITVV), 665 to 685 (NIII…FMFL), 799 to 819 (VLAW…TTVI), and 825 to 845 (ASIY…IRFT).

It belongs to the chitin synthase family.

Its subcellular location is the cell membrane. The enzyme catalyses [(1-&gt;4)-N-acetyl-beta-D-glucosaminyl](n) + UDP-N-acetyl-alpha-D-glucosamine = [(1-&gt;4)-N-acetyl-beta-D-glucosaminyl](n+1) + UDP + H(+). In terms of biological role, polymerizes chitin, a structural polymer of the cell wall and septum, by transferring the sugar moiety of UDP-GlcNAc to the non-reducing end of the growing chitin polymer. In Rhizopus oligosporus (Rhizopus microsporus var. oligosporus), this protein is Chitin synthase 2 (CHS2).